Here is a 172-residue protein sequence, read N- to C-terminus: 16S rRNA aminocarboxypropyltransferase (172 aa).

S-adenosyl-L-methionine contacts are provided by Thr21, Leu71, Leu93, and Thr112.

The protein belongs to the TDD superfamily. TSR3 family.

Its subcellular location is the cytoplasm. It catalyses the reaction an N(1)-methylpseudouridine in rRNA + S-adenosyl-L-methionine = N(1)-methyl-N(3)-[(3S)-3-amino-3-carboxypropyl]pseudouridine in rRNA + S-methyl-5'-thioadenosine + H(+). Functionally, aminocarboxypropyltransferase that catalyzes the aminocarboxypropyl transfer on pseudouridine at position 914 in 16S rRNA. It constitutes the last step in biosynthesis of the hypermodified N1-methyl-N3-(3-amino-3-carboxypropyl) pseudouridine (m1acp3-Psi). This chain is 16S rRNA aminocarboxypropyltransferase, found in Methanocaldococcus jannaschii (strain ATCC 43067 / DSM 2661 / JAL-1 / JCM 10045 / NBRC 100440) (Methanococcus jannaschii).